A 349-amino-acid chain; its full sequence is tRNA pseudouridine synthase D (349 aa).

Residue F27 participates in substrate binding. The Nucleophile role is filled by D80. Position 129 (N129) interacts with substrate. Residues 155-303 (GVPNYFGAQR…VEAARRAMLL (149 aa)) enclose the TRUD domain. Substrate is bound at residue F329.

Belongs to the pseudouridine synthase TruD family.

It carries out the reaction uridine(13) in tRNA = pseudouridine(13) in tRNA. Functionally, responsible for synthesis of pseudouridine from uracil-13 in transfer RNAs. In Escherichia coli (strain 55989 / EAEC), this protein is tRNA pseudouridine synthase D.